Here is a 260-residue protein sequence, read N- to C-terminus: Tetraspanin-14 (260 aa).

At 1–10 (MKSQSHKPWN) the chain is on the cytoplasmic side. Residues 11–31 (LVAGIFFPIITFFLSAPLVGH) form a helical membrane-spanning segment. Topologically, residues 32 to 54 (ALYLFCMRNDHVYYRDFQSTLPR) are extracellular. A helical membrane pass occupies residues 55 to 75 (VQTLVSVSLLALFLLSNIGMF). The Cytoplasmic segment spans residues 76–80 (LRPRR). A helical membrane pass occupies residues 81–101 (LSYFLVIVFFIGFAYSGVYKM). Residues 102–260 (ESRRFSPTPM…FLSSLTSLFR (159 aa)) lie on the Extracellular side of the membrane. N-linked (GlcNAc...) asparagine glycosylation is present at asparagine 182.

This sequence belongs to the tetraspanin (TM4SF) family.

It is found in the membrane. Its function is as follows. May be involved in the regulation of cell differentiation. This Arabidopsis thaliana (Mouse-ear cress) protein is Tetraspanin-14 (TET14).